Here is a 321-residue protein sequence, read N- to C-terminus: tRNA-dihydrouridine synthase B (321 aa).

Residues 16 to 18 and Q70 each bind FMN; that span reads PMA. The active-site Proton donor is the C100. Residues K139, 200–202, and 224–225 each bind FMN; these read NGD and GR.

It belongs to the Dus family. DusB subfamily. It depends on FMN as a cofactor.

It catalyses the reaction a 5,6-dihydrouridine in tRNA + NAD(+) = a uridine in tRNA + NADH + H(+). It carries out the reaction a 5,6-dihydrouridine in tRNA + NADP(+) = a uridine in tRNA + NADPH + H(+). Functionally, catalyzes the synthesis of 5,6-dihydrouridine (D), a modified base found in the D-loop of most tRNAs, via the reduction of the C5-C6 double bond in target uridines. The protein is tRNA-dihydrouridine synthase B of Shigella flexneri.